The chain runs to 255 residues: Alkaline ceramidase (255 aa).

Residues 1 to 28 (MADGISSFWGPVTSTIECCEMNYAYSSY) lie on the Lumenal side of the membrane. A helical transmembrane segment spans residues 29 to 49 (IAEFYNTISNVPGILLALIGL). Topologically, residues 50–60 (VNALRQRFEKR) are cytoplasmic. A helical membrane pass occupies residues 61–81 (FSILHISNMILAIGSMLYHAT). His-79 contacts Zn(2+). Residues 82–91 (LQHVQQQSDE) are Lumenal-facing. A helical transmembrane segment spans residues 92 to 112 (TPMVWEILLYMYILYSPDWHY). Residues 113–118 (RSTMPT) are Cytoplasmic-facing. 2 helical membrane passes run 119–139 (FLFLYGAAFAIVHAYLRFGIG) and 140–160 (FKVHYVILCLLCIPRMYKYYI). Over 161–169 (HTEDTAAKR) the chain is Cytoplasmic. The helical transmembrane segment at 170 to 192 (IAKWYVATILVGSICWFCDRVFC) threads the bilayer. The Lumenal segment spans residues 193-205 (KTISQWPVNPQGH). Zn(2+)-binding residues include His-205 and His-209. The helical transmembrane segment at 206–226 (ALWHVFMSFNSYCANTFLMFC) threads the bilayer. Residues 227-255 (RAQQRGWNPKVKYFLGVLPYVKIEKPKTQ) lie on the Cytoplasmic side of the membrane.

The protein belongs to the alkaline ceramidase family. Zn(2+) serves as cofactor. Mostly expressed in roots, shoot meristems and pollen, and, to a lower extent, in mature leaves.

The protein localises to the endoplasmic reticulum membrane. It localises to the golgi apparatus membrane. In terms of biological role, hydrolyzes only phytoceramide into phytosphingosine and free fatty acid. Does not have reverse activity. Affects plant morphogenesis. Required for the formation of wax layer that ensure cuticle permeability. Implicated in abscisic acid (ABA)-mediated stomatal closure. Involved in both biotic and abiotic stresses. Promotes salt resistance and defenses responses toward pathogenic bacteria (e.g. P.syringae) and against the fungal toxin fumonisin B1 (FB1). This Arabidopsis thaliana (Mouse-ear cress) protein is Alkaline ceramidase.